The sequence spans 1099 residues: SLIT-ROBO Rho GTPase-activating protein 3 (1099 aa).

Residues 19–314 (AQIKEIRTQL…AVDNLDSRSD (296 aa)) form the F-BAR domain. A coiled-coil region spans residues 352-392 (QTELLMRYHQLQSRLATLKIENEEVRKTLDATMQTLQDMLT). Positions 470 to 493 (GERAECGTTRPPCLPPKPQKMRRP) are disordered. The Rho-GAP domain maps to 506-694 (GSMEAFIKDS…TIIIHHEAIF (189 aa)). One can recognise an SH3 domain in the interval 744–803 (VEQIEAIAKFDYVGRSPRELSFKKGASLLLYHRASEDWWEGRHNGVDGLIPHQYIVVQDM). Over residues 809 to 820 (DSLSQKADSEAS) the composition is skewed to polar residues. The tract at residues 809 to 846 (DSLSQKADSEASSGPLLDDKASSKNDLQSPTEHISDYG) is disordered. Phosphoserine is present on residues serine 817, serine 820, serine 821, serine 837, and serine 858. A disordered region spans residues 861 to 911 (AAIPRRRSGGDTHSPPRGLGPSIDTPPRAAACPSSPHKIPLSRGRIESPEK). The stretch at 952–987 (HKSLEAEALAEDIEKTMSTALHELRELERQNTVKQA) forms a coiled coil. Serine 954 is modified (phosphoserine). 2 disordered regions span residues 994–1014 (TLEPLKNPPGPISSEPASPLH) and 1045–1099 (ARLA…SGTM). Residues 1060 to 1074 (VRPVVQHRSSSSSSS) show a composition bias toward low complexity. Positions 1089–1099 (PNSSSDKSGTM) are enriched in polar residues.

In terms of assembly, homodimer. Forms a heterooligomer with SRGAP1 and SRGAP2 through its F-BAR domain. Interacts with WASF1. Probably interacts with ROBO1. Interacts with FASLG.

Its function is as follows. GTPase-activating protein for RAC1 and perhaps CDC42, but not for RhoA small GTPase. May attenuate RAC1 signaling in neurons. This is SLIT-ROBO Rho GTPase-activating protein 3 (Srgap3) from Mus musculus (Mouse).